The primary structure comprises 386 residues: RNA polymerase sigma factor SigA (386 aa).

The tract at residues L154 to T224 is sigma-70 factor domain-2. The short motif at D178–Q181 is the Interaction with polymerase core subunit RpoC element. The segment at E233 to Y309 is sigma-70 factor domain-3. The interval V322 to H375 is sigma-70 factor domain-4. The segment at residues L348–A367 is a DNA-binding region (H-T-H motif).

It belongs to the sigma-70 factor family. RpoD/SigA subfamily. As to quaternary structure, interacts transiently with the RNA polymerase catalytic core.

It localises to the cytoplasm. Its function is as follows. Sigma factors are initiation factors that promote the attachment of RNA polymerase to specific initiation sites and are then released. This sigma factor is the primary sigma factor during exponential growth. The polypeptide is RNA polymerase sigma factor SigA (Lactococcus lactis subsp. lactis (strain IL1403) (Streptococcus lactis)).